The primary structure comprises 309 residues: Zinc transporter ZIPB (309 aa).

Residues 1 to 22 (MNQPSSLAADLRGAWHAQAQSH) lie on the Periplasmic side of the membrane. Residues 23–50 (PLITLGLAASAAGVVLLLVAGIVNALTG) form a helical membrane-spanning segment. Over 51–55 (ENRVH) the chain is Extracellular. Residues 56 to 81 (VGYAVLGGAAGFAATALGALMALGLR) traverse the membrane as a helical segment. At 82-83 (AI) the chain is on the periplasmic side. Residues 84–119 (SARTQDAMLGFAAGMMLAASAFSLILPGLDAAGTIV) form a helical membrane-spanning segment. Zn(2+) is bound at residue Asp-89. Met-99 lines the Cd(2+) pocket. At 120–121 (GP) the chain is on the extracellular side. The chain crosses the membrane as a helical span at residues 122–145 (GPAAAAVVALGLGLGVLLMLGLDY). Residue Asp-144 coordinates Zn(2+). Asp-144 contacts Cd(2+). The Periplasmic segment spans residues 146-165 (FTPHEHERTGHQGPEAARVN). The chain crosses the membrane as a helical span at residues 166-190 (RVWLFVLTIILHNLPEGMAIGVSFA). A Zn(2+)-binding site is contributed by His-177. His-177, Asn-178, and Glu-181 together coordinate Cd(2+). Glu-181 serves as a coordination point for Zn(2+). Residues 191 to 192 (TG) lie on the Extracellular side of the membrane. Residues 193–222 (DLRIGLPLTSAIAIQDVPEGLAVALALRAV) traverse the membrane as a helical segment. Gln-207 serves as a coordination point for Zn(2+). Cd(2+) is bound by residues Gln-207, Asp-208, and Glu-211. Position 211 (Glu-211) interacts with Zn(2+). Residues 223 to 224 (GL) lie on the Periplasmic side of the membrane. The chain crosses the membrane as a helical span at residues 225 to 251 (PIGRAVLVAVASGLMEPLGALVGVGIS). Residue Glu-240 participates in Cd(2+) binding. Residues 252–255 (SGFA) are Extracellular-facing. The chain crosses the membrane as a helical span at residues 256-275 (LAYPISMGLAAGAMIFVVSH). 3 residues coordinate Zn(2+): His-275, Glu-276, and His-286. His-275 provides a ligand contact to Cd(2+). Over 276 to 287 (EVIPETHRNGHE) the chain is Periplasmic. The helical transmembrane segment at 288 to 308 (TTATVGLMAGFALMMFLDTAL) threads the bilayer. Gly-309 is a topological domain (extracellular).

This sequence belongs to the ZIP transporter (TC 2.A.5) family. In terms of assembly, homodimer. Also exists as a monomer.

It is found in the cell inner membrane. The enzyme catalyses Zn(2+)(in) = Zn(2+)(out). The catalysed reaction is Cd(2+)(in) = Cd(2+)(out). Functionally, selective electrodiffusional channel that mediates the uptake of Zn(2+). Exploits in vivo zinc concentration gradients (maintained by cellular zinc homeostasis) to passively move zinc ions into the cytoplasm. ZIPB-mediated zinc flux is dependent upon pH, but independent of the proton motive force. Is also able to import Cd(2+), but is not permeable to Co(2+), Cu(2+), Fe(2+), Mn(2+) and Ni(2+). This chain is Zinc transporter ZIPB, found in Bordetella bronchiseptica (strain ATCC BAA-588 / NCTC 13252 / RB50) (Alcaligenes bronchisepticus).